Here is a 283-residue protein sequence, read N- to C-terminus: Glutamate racemase (283 aa).

Substrate is bound by residues aspartate 28–serine 29 and tyrosine 60–glycine 61. Cysteine 92 (proton donor/acceptor) is an active-site residue. Asparagine 93–threonine 94 contacts substrate. Cysteine 204 (proton donor/acceptor) is an active-site residue. Threonine 205–histidine 206 contributes to the substrate binding site.

The protein belongs to the aspartate/glutamate racemases family.

It carries out the reaction L-glutamate = D-glutamate. Its pathway is cell wall biogenesis; peptidoglycan biosynthesis. In terms of biological role, provides the (R)-glutamate required for cell wall biosynthesis. The sequence is that of Glutamate racemase from Salmonella choleraesuis (strain SC-B67).